Consider the following 160-residue polypeptide: Transcription antitermination protein NusB (160 aa).

This sequence belongs to the NusB family.

Involved in transcription antitermination. Required for transcription of ribosomal RNA (rRNA) genes. Binds specifically to the boxA antiterminator sequence of the ribosomal RNA (rrn) operons. This is Transcription antitermination protein NusB from Sinorhizobium medicae (strain WSM419) (Ensifer medicae).